Reading from the N-terminus, the 287-residue chain is MTMMDMNFKYCHKIMKKHSKSFSYAFDLLPEDQRKAVWAIYAVCRKIDDSIDVYGDIQFLNQIKEDIQSIEKYPYEYHHFQSDRRIMMALQHVAQHKNIAFQSFYNLIDTVYKDQHFTMFETDAELFGYCYGVAGTVGEVLTPILSDHETHQTYDVARRLGESLQLINILRDVGEDFENERIYFSKQRLKQYEVDIAEVYQNGVNNHYIDLWEYYAAIAEKDFRDVMDQIKVFSIEAQPIIELAARIYIEILDEVRQANYTLHERVFVEKRKKAKLFHEINSKYHRI.

Residues 18–21 (HSKS), Tyr-41, and Arg-45 contribute to the (2E,6E)-farnesyl diphosphate site. Mg(2+)-binding residues include Asp-48 and Asp-52. Residue Gln-165 coordinates (2E,6E)-farnesyl diphosphate. Asn-168 lines the Mg(2+) pocket. Position 171 (Arg-171) interacts with (2E,6E)-farnesyl diphosphate. Mg(2+) is bound at residue Asp-172. Tyr-248 contributes to the (2E,6E)-farnesyl diphosphate binding site.

It belongs to the phytoene/squalene synthase family. CrtM subfamily. Mg(2+) is required as a cofactor.

The catalysed reaction is 2 (2E,6E)-farnesyl diphosphate = 15-cis-4,4'-diapophytoene + 2 diphosphate. Its pathway is carotenoid biosynthesis; staphyloxanthin biosynthesis; staphyloxanthin from farnesyl diphosphate: step 1/5. In terms of biological role, involved in the biosynthesis of the yellow-orange carotenoid staphyloxanthin, which plays a role in the virulence via its protective function against oxidative stress. Catalyzes the head-to-head condensation of two molecules of farnesyl diphosphate (FPP) into the colorless C(30) carotenoid 4,4'-diapophytoene (dehydrosqualene). The chain is 4,4'-diapophytoene synthase from Staphylococcus aureus.